The chain runs to 343 residues: MRN complex-interacting protein (343 aa).

Residues Glu-75–Glu-104 form a disordered region. A compositionally biased stretch (polar residues) spans Gly-87–Glu-104. Ser-100 and Ser-115 each carry phosphoserine. 3 disordered regions span residues Ser-128–Gln-178, Ser-193–Gly-212, and Ala-230–Pro-324. Positions Arg-148 to Lys-151 match the Nuclear localization signal (NLS) motif. Residues Ser-193 to Asp-202 are compositionally biased toward polar residues. The necessary for the association with the MRN complex stretch occupies residues Lys-213 to Arg-237. Positions Ser-240–Arg-255 are enriched in basic and acidic residues.

The protein belongs to the MRNIP family. Associates with the MRE11-RAD50-NBN (MRN) damage-sensing complex; this association is constitutive. Interacts with MRE11. Interacts with NBN. Interacts with RAD50. In terms of processing, phosphorylated; phosphorylation is constitutive and occurs in the absence of any DNA-damaging stimulus. Phosphorylation on Ser-115 is necessary for its nuclear retention.

Its subcellular location is the nucleus. The protein resides in the nucleoplasm. In terms of biological role, plays a role in the cellular response to DNA damage and the maintenance of genome stability through its association with the MRN damage-sensing complex. Promotes chromatin loading and activity of the MRN complex to facilitate subsequent ATM-mediated DNA damage response signaling and DNA repair. This chain is MRN complex-interacting protein, found in Homo sapiens (Human).